Here is a 138-residue protein sequence, read N- to C-terminus: Putative pre-16S rRNA nuclease (138 aa).

Belongs to the YqgF nuclease family.

It localises to the cytoplasm. In terms of biological role, could be a nuclease involved in processing of the 5'-end of pre-16S rRNA. The polypeptide is Putative pre-16S rRNA nuclease (Listeria monocytogenes serotype 4b (strain CLIP80459)).